The chain runs to 220 residues: PRA1 family protein B4 (220 aa).

The tract at residues Met1 to Ser27 is disordered. The segment covering Ser12–Ser27 has biased composition (polar residues). The next 5 membrane-spanning stretches (helical) occupy residues Tyr83–Val103, His105–Phe125, Gly146–Val166, Met170–Leu190, and Ala196–Ile216.

This sequence belongs to the PRA1 family. In terms of assembly, interacts with PRA1B1, PRA1B2, PRA1B3, PRA1B5, PRA1B6 and PRA1E. In terms of tissue distribution, expressed in roots, lateral roots, lateral root caps, stomata and trichomes.

It localises to the endosome membrane. Functionally, may be involved in both secretory and endocytic intracellular trafficking in the endosomal/prevacuolar compartments. The polypeptide is PRA1 family protein B4 (PRA1B4) (Arabidopsis thaliana (Mouse-ear cress)).